Consider the following 179-residue polypeptide: ATP synthase subunit delta (179 aa).

This sequence belongs to the ATPase delta chain family. As to quaternary structure, F-type ATPases have 2 components, F(1) - the catalytic core - and F(0) - the membrane proton channel. F(1) has five subunits: alpha(3), beta(3), gamma(1), delta(1), epsilon(1). F(0) has three main subunits: a(1), b(2) and c(10-14). The alpha and beta chains form an alternating ring which encloses part of the gamma chain. F(1) is attached to F(0) by a central stalk formed by the gamma and epsilon chains, while a peripheral stalk is formed by the delta and b chains.

Its subcellular location is the cell membrane. In terms of biological role, f(1)F(0) ATP synthase produces ATP from ADP in the presence of a proton or sodium gradient. F-type ATPases consist of two structural domains, F(1) containing the extramembraneous catalytic core and F(0) containing the membrane proton channel, linked together by a central stalk and a peripheral stalk. During catalysis, ATP synthesis in the catalytic domain of F(1) is coupled via a rotary mechanism of the central stalk subunits to proton translocation. This protein is part of the stalk that links CF(0) to CF(1). It either transmits conformational changes from CF(0) to CF(1) or is implicated in proton conduction. This chain is ATP synthase subunit delta, found in Staphylococcus epidermidis (strain ATCC 35984 / DSM 28319 / BCRC 17069 / CCUG 31568 / BM 3577 / RP62A).